The primary structure comprises 527 residues: MQKERVIMTNISTLNDVQKIIVLDYGSQYNQLIARRIREFGVFSELKSHKITADEVRAINPIGIILSGGPNSVYAEDAFGIDEEIFELGIPILGICYGMQLLTHKLGGKVVPAGEAGNREYGQSTLRLRAQSELFAGTPEEQVVLMSHGDAVTEIPEGFHLVADSVDCPFAAMEDTKKNFYGIQFHPEVRHTVYGNDILKNFAFSICGAKGDWSMANFVDMQIAQIRETVGDRKVLLGLSGGVDSSVVGVLLQKAIGDQLTCIFVDHGLLRKGEGDQVMEMLGGKFGLNIIRVDASKRFLDLLAGVDDPEKKRKIIGNEFVHVFDDEASKLKGVDFLAQGTLYTDIIESGTETAQTIKSHHNVGGLPEDMQFELIEPLNTLFKDEVRALGTELGMPDEVVWRQPFPGPGLAIRIMGEITEEKLETVRESDAILREEIAKAGLDRDVWQYFTVNTGVRSVGVMGDGRTYDYTIAIRAITSIDGMTADFAKLPWEVLQKISVRIVNEVDHVNRIVYDITSKPPATVEWE.

The Glutamine amidotransferase type-1 domain maps to 19–212; it reads KIIVLDYGSQ…AFSICGAKGD (194 aa). Cysteine 96 (nucleophile) is an active-site residue. Catalysis depends on residues histidine 186 and glutamate 188. The GMPS ATP-PPase domain maps to 213–402; sequence WSMANFVDMQ…LGMPDEVVWR (190 aa). 240-246 contacts ATP; the sequence is SGGVDSS.

As to quaternary structure, homodimer.

It catalyses the reaction XMP + L-glutamine + ATP + H2O = GMP + L-glutamate + AMP + diphosphate + 2 H(+). It functions in the pathway purine metabolism; GMP biosynthesis; GMP from XMP (L-Gln route): step 1/1. In terms of biological role, catalyzes the synthesis of GMP from XMP. In Streptococcus thermophilus (strain ATCC BAA-250 / LMG 18311), this protein is GMP synthase [glutamine-hydrolyzing].